Reading from the N-terminus, the 501-residue chain is ATP synthase subunit alpha (501 aa).

Residue G170–S177 participates in ATP binding.

The protein belongs to the ATPase alpha/beta chains family. As to quaternary structure, F-type ATPases have 2 components, CF(1) - the catalytic core - and CF(0) - the membrane proton channel. CF(1) has five subunits: alpha(3), beta(3), gamma(1), delta(1), epsilon(1). CF(0) has three main subunits: a(1), b(2) and c(9-12). The alpha and beta chains form an alternating ring which encloses part of the gamma chain. CF(1) is attached to CF(0) by a central stalk formed by the gamma and epsilon chains, while a peripheral stalk is formed by the delta and b chains.

Its subcellular location is the cell membrane. The enzyme catalyses ATP + H2O + 4 H(+)(in) = ADP + phosphate + 5 H(+)(out). Its function is as follows. Produces ATP from ADP in the presence of a proton gradient across the membrane. The alpha chain is a regulatory subunit. This Acholeplasma laidlawii (strain PG-8A) protein is ATP synthase subunit alpha.